Here is a 716-residue protein sequence, read N- to C-terminus: Polyribonucleotide nucleotidyltransferase (716 aa).

Residues Asp485 and Asp491 each coordinate Mg(2+). The 60-residue stretch at 552-611 folds into the KH domain; sequence PRFTTIKIDQDKIKDVIGKGGAVIRELTESTNTNIEIGDDGTIKVAASDQADADAAIEKI. The S1 motif domain maps to 621-689; that stretch reads GKIYQGKVAR…RQGRVRLSMK (69 aa). The segment covering 689 to 698 has biased composition (basic and acidic residues); it reads KEAAEKKEEP. Residues 689 to 716 form a disordered region; the sequence is KEAAEKKEEPAPEAPAEPAAEEENKSEE. Residues 707 to 716 are compositionally biased toward acidic residues; sequence AAEEENKSEE.

Belongs to the polyribonucleotide nucleotidyltransferase family. As to quaternary structure, component of the RNA degradosome, which is a multiprotein complex involved in RNA processing and mRNA degradation. It depends on Mg(2+) as a cofactor.

The protein resides in the cytoplasm. It carries out the reaction RNA(n+1) + phosphate = RNA(n) + a ribonucleoside 5'-diphosphate. Involved in mRNA degradation. Catalyzes the phosphorolysis of single-stranded polyribonucleotides processively in the 3'- to 5'-direction. This chain is Polyribonucleotide nucleotidyltransferase, found in Idiomarina loihiensis (strain ATCC BAA-735 / DSM 15497 / L2-TR).